Consider the following 98-residue polypeptide: Small ribosomal subunit protein uS19 (98 aa).

The disordered stretch occupies residues 77–98 (TRTYRGHAGGKAEKGGAAPKRK).

The protein belongs to the universal ribosomal protein uS19 family.

Functionally, protein S19 forms a complex with S13 that binds strongly to the 16S ribosomal RNA. The chain is Small ribosomal subunit protein uS19 from Chlorobium phaeovibrioides (strain DSM 265 / 1930) (Prosthecochloris vibrioformis (strain DSM 265)).